A 275-amino-acid polypeptide reads, in one-letter code: 4-hydroxy-tetrahydrodipicolinate reductase (275 aa).

12-17 (GAAGRM) contributes to the NAD(+) binding site. Arg39 contributes to the NADP(+) binding site. Residues 102–104 (GTT) and 126–129 (SGNM) each bind NAD(+). His160 functions as the Proton donor/acceptor in the catalytic mechanism. Residue His161 coordinates (S)-2,3,4,5-tetrahydrodipicolinate. Catalysis depends on Lys164, which acts as the Proton donor. 170 to 171 (GT) serves as a coordination point for (S)-2,3,4,5-tetrahydrodipicolinate.

This sequence belongs to the DapB family.

The protein localises to the cytoplasm. The catalysed reaction is (S)-2,3,4,5-tetrahydrodipicolinate + NAD(+) + H2O = (2S,4S)-4-hydroxy-2,3,4,5-tetrahydrodipicolinate + NADH + H(+). It catalyses the reaction (S)-2,3,4,5-tetrahydrodipicolinate + NADP(+) + H2O = (2S,4S)-4-hydroxy-2,3,4,5-tetrahydrodipicolinate + NADPH + H(+). It functions in the pathway amino-acid biosynthesis; L-lysine biosynthesis via DAP pathway; (S)-tetrahydrodipicolinate from L-aspartate: step 4/4. Catalyzes the conversion of 4-hydroxy-tetrahydrodipicolinate (HTPA) to tetrahydrodipicolinate. In Agrobacterium fabrum (strain C58 / ATCC 33970) (Agrobacterium tumefaciens (strain C58)), this protein is 4-hydroxy-tetrahydrodipicolinate reductase.